A 348-amino-acid polypeptide reads, in one-letter code: Protein pelota homolog (348 aa).

It belongs to the eukaryotic release factor 1 family. Pelota subfamily. Monomer. Requires a divalent metal cation as cofactor.

It localises to the cytoplasm. Functionally, may function in recognizing stalled ribosomes, interact with stem-loop structures in stalled mRNA molecules, and effect endonucleolytic cleavage of the mRNA. May play a role in the release non-functional ribosomes and degradation of damaged mRNAs. Has endoribonuclease activity. In Methanococcus maripaludis (strain C6 / ATCC BAA-1332), this protein is Protein pelota homolog.